We begin with the raw amino-acid sequence, 309 residues long: MASTSNVTELIFTGLFQDPAVQSVCFVVFLPVYLATVVGNGLIVLTVSISKSLDSPMYFFLSCLSLVEISYSSTIAPKFIIDLLAKIKTISLEGCLTQIFFFHFFGVAEILLIVVMAYDCYVAICKPLHYMNIISRQLCHLLVAGSWLGGFCHSIIQILVIIQLPFCGPNVIDHYFCDLQPLFKLACTDTFMEGVIVLANSGLFSVFSFLILVSSYIVILVNLRNHSAEGRHKALSTCASHITVVILFFGPAIFLYMRPSSTFTEDKLVAVFYTVITPMLNPIIYTLRNAEVKIAIRRLWSKKENPGRE.

Topologically, residues 1-23 (MASTSNVTELIFTGLFQDPAVQS) are extracellular. N-linked (GlcNAc...) asparagine glycosylation is present at Asn-6. The chain crosses the membrane as a helical span at residues 24–47 (VCFVVFLPVYLATVVGNGLIVLTV). At 48–55 (SISKSLDS) the chain is on the cytoplasmic side. Residues 56–77 (PMYFFLSCLSLVEISYSSTIAP) form a helical membrane-spanning segment. Over 78-98 (KFIIDLLAKIKTISLEGCLTQ) the chain is Extracellular. Cysteines 95 and 187 form a disulfide. A helical membrane pass occupies residues 99–118 (IFFFHFFGVAEILLIVVMAY). At 119–137 (DCYVAICKPLHYMNIISRQ) the chain is on the cytoplasmic side. The helical transmembrane segment at 138–156 (LCHLLVAGSWLGGFCHSII) threads the bilayer. The Extracellular portion of the chain corresponds to 157–193 (QILVIIQLPFCGPNVIDHYFCDLQPLFKLACTDTFME). A helical transmembrane segment spans residues 194-217 (GVIVLANSGLFSVFSFLILVSSYI). At 218-233 (VILVNLRNHSAEGRHK) the chain is on the cytoplasmic side. Residues 234-256 (ALSTCASHITVVILFFGPAIFLY) form a helical membrane-spanning segment. Residues 257–267 (MRPSSTFTEDK) are Extracellular-facing. Residues 268 to 287 (LVAVFYTVITPMLNPIIYTL) form a helical membrane-spanning segment. Topologically, residues 288 to 309 (RNAEVKIAIRRLWSKKENPGRE) are cytoplasmic.

Belongs to the G-protein coupled receptor 1 family.

Its subcellular location is the cell membrane. Odorant receptor. This Homo sapiens (Human) protein is Olfactory receptor 4B1 (OR4B1).